Consider the following 448-residue polypeptide: Divalent metal cation transporter MntH (448 aa).

A run of 11 helical transmembrane segments spans residues Leu41–Trp61, Ser69–Leu89, Gly117–Ile137, Phe147–Phe167, Ile176–Val196, Ile215–Pro235, Phe270–Phe290, Leu307–Ala327, Val363–Glu383, Leu384–Val404, and Ile424–Thr444.

Belongs to the NRAMP family.

Its subcellular location is the cell membrane. Functionally, h(+)-stimulated, divalent metal cation uptake system. This chain is Divalent metal cation transporter MntH, found in Listeria welshimeri serovar 6b (strain ATCC 35897 / DSM 20650 / CCUG 15529 / CIP 8149 / NCTC 11857 / SLCC 5334 / V8).